We begin with the raw amino-acid sequence, 347 residues long: Anthranilate phosphoribosyltransferase (347 aa).

Residues Gly88, 91–92, Thr96, 98–101, 116–124, and Ser128 contribute to the 5-phospho-alpha-D-ribose 1-diphosphate site; these read GD, NIST, and KHGNRSVSS. Residue Gly88 participates in anthranilate binding. Residue Ser100 coordinates Mg(2+). Asn119 is an anthranilate binding site. Arg174 serves as a coordination point for anthranilate. Mg(2+) is bound by residues Asp232 and Glu233.

This sequence belongs to the anthranilate phosphoribosyltransferase family. In terms of assembly, homodimer. Mg(2+) serves as cofactor.

It catalyses the reaction N-(5-phospho-beta-D-ribosyl)anthranilate + diphosphate = 5-phospho-alpha-D-ribose 1-diphosphate + anthranilate. Its pathway is amino-acid biosynthesis; L-tryptophan biosynthesis; L-tryptophan from chorismate: step 2/5. Functionally, catalyzes the transfer of the phosphoribosyl group of 5-phosphorylribose-1-pyrophosphate (PRPP) to anthranilate to yield N-(5'-phosphoribosyl)-anthranilate (PRA). This Shewanella sp. (strain ANA-3) protein is Anthranilate phosphoribosyltransferase.